Reading from the N-terminus, the 154-residue chain is 3-hydroxyacyl-[acyl-carrier-protein] dehydratase FabZ (154 aa).

His-54 is a catalytic residue.

This sequence belongs to the thioester dehydratase family. FabZ subfamily.

The protein resides in the cytoplasm. The catalysed reaction is a (3R)-hydroxyacyl-[ACP] = a (2E)-enoyl-[ACP] + H2O. Its function is as follows. Involved in unsaturated fatty acids biosynthesis. Catalyzes the dehydration of short chain beta-hydroxyacyl-ACPs and long chain saturated and unsaturated beta-hydroxyacyl-ACPs. This is 3-hydroxyacyl-[acyl-carrier-protein] dehydratase FabZ from Shewanella putrefaciens (strain CN-32 / ATCC BAA-453).